The following is a 107-amino-acid chain: MARIRKSDQVIILAGKDKGKRGTVLRVLDDGHLVVEGVNRVKKHQKPNPMRNIQGGIVEKEMPIDASNVALFNPATQKADRVGSKVLEDGRKVRVFKSNGEMVDAQG.

It belongs to the universal ribosomal protein uL24 family. As to quaternary structure, part of the 50S ribosomal subunit.

In terms of biological role, one of two assembly initiator proteins, it binds directly to the 5'-end of the 23S rRNA, where it nucleates assembly of the 50S subunit. One of the proteins that surrounds the polypeptide exit tunnel on the outside of the subunit. The sequence is that of Large ribosomal subunit protein uL24 from Thiobacillus denitrificans (strain ATCC 25259 / T1).